We begin with the raw amino-acid sequence, 470 residues long: Aldehyde dehydrogenase family 3 comG (470 aa).

Residue 196 to 201 (GSVKVG) coordinates NAD(+). Catalysis depends on residues Glu-218 and Cys-252.

This sequence belongs to the aldehyde dehydrogenase family.

It localises to the cytoplasm. The catalysed reaction is an aldehyde + NADP(+) + H2O = a carboxylate + NADPH + 2 H(+). The enzyme catalyses an aldehyde + NAD(+) + H2O = a carboxylate + NADH + 2 H(+). In Dictyostelium discoideum (Social amoeba), this protein is Aldehyde dehydrogenase family 3 comG (comG).